A 217-amino-acid chain; its full sequence is uncharacterized protein (217 aa).

The signal sequence occupies residues 1-32 (MPITKATPLFLRYRLKGFVFLTLLLVQGVFTA). The N-palmitoyl cysteine moiety is linked to residue cysteine 33. Cysteine 33 carries S-diacylglycerol cysteine lipidation.

It belongs to the MG067/MG068/MG395 family.

Its subcellular location is the cell membrane. This is an uncharacterized protein from Mycoplasma pneumoniae (strain ATCC 29342 / M129 / Subtype 1) (Mycoplasmoides pneumoniae).